The chain runs to 635 residues: ATP-binding protein Uup (635 aa).

ABC transporter domains follow at residues 1–253 (MSLI…RVEE) and 320–546 (FEME…KTEE). ATP is bound by residues 36–43 (GRNGAGKS) and 352–359 (GPNGCGKT). The C-terminal domain (CTD), binds DNA, required to complement a deletion mutant stretch occupies residues 551 to 635 (KAETVKRSSS…EYLEALKNGG (85 aa)). Residues 563 to 631 (SYKLQRELEQ…FERWEYLEAL (69 aa)) are a coiled coil.

The protein belongs to the ABC transporter superfamily. ABCF family. Uup subfamily.

The protein localises to the cytoplasm. It carries out the reaction ATP + H2O = ADP + phosphate + H(+). With respect to regulation, ATPase activity inhibited by N-ethylmaleimide but not by vanadate. Probably plays a role in ribosome assembly or function; overexpression suppresses cold-sensitive growth of a bipA deletion. May be involved in resolution of branched DNA intermediates that result from template switching in postreplication gaps. Binds DNA at Holliday junctions. May be involved in the correct segregation of nucleoids. Has ATPase activity, binds DNA non-sequence specifically; the presence of DNA does not change the ATPase activity. Mutations in this gene cause an increase in RecA-independent precise excision of transposons and insertion elements, and also reduce bacteriophage Mu growth. Genetic interactions among priB, dam, lexA, nagC, polA, rdgB, rdgB, rep and uup link the PriA-PriB replication restart pathway to DNA double-strand break repair. The protein is ATP-binding protein Uup of Escherichia coli (strain K12).